A 309-amino-acid chain; its full sequence is Mitochondrial fission regulator 1-like (309 aa).

The interval 189–221 is disordered; sequence DVTEEDEEEEEEEDREEEEEDVSELVPDPMPPV. Residues 190–211 are compositionally biased toward acidic residues; sequence VTEEDEEEEEEEDREEEEEDVS. Position 253 is a phosphoserine (S253).

This sequence belongs to the MTFR1 family.

Its subcellular location is the mitochondrion outer membrane. Functionally, mitochondrial protein required for adaptation of miochondrial dynamics to metabolic changes. Regulates mitochondrial morphology at steady state and mediates AMPK-dependent stress-induced mitochondrial fragmentation via the control of OPA1 levels. In Danio rerio (Zebrafish), this protein is Mitochondrial fission regulator 1-like (mtfr1l).